The sequence spans 94 residues: MNSREMFCVFILFASFFYCSYAEQECNCDKSCEPVKDCTFGTAMDKCGCCEVCAVGIGHFCGKFFNNAVCAEGLKCAKLGEGADGEALEICLRA.

The first 22 residues, 1-22 (MNSREMFCVFILFASFFYCSYA), serve as a signal peptide directing secretion. Intrachain disulfides connect Cys-19-Cys-47, Cys-26-Cys-49, Cys-32-Cys-50, Cys-38-Cys-53, Cys-61-Cys-76, and Cys-70-Cys-91. An IGFBP N-terminal domain is found at 23 to 94 (EQECNCDKSC…GEALEICLRA (72 aa)).

In terms of tissue distribution, expressed by the venom gland.

It is found in the secreted. In Lychas mucronatus (Chinese swimming scorpion), this protein is Venom protein 59.1.